The primary structure comprises 212 residues: Ribosomal RNA large subunit methyltransferase E (212 aa).

S-adenosyl-L-methionine contacts are provided by glycine 57, tryptophan 59, aspartate 77, aspartate 93, and aspartate 122. Lysine 162 acts as the Proton acceptor in catalysis.

The protein belongs to the class I-like SAM-binding methyltransferase superfamily. RNA methyltransferase RlmE family.

It is found in the cytoplasm. It carries out the reaction uridine(2552) in 23S rRNA + S-adenosyl-L-methionine = 2'-O-methyluridine(2552) in 23S rRNA + S-adenosyl-L-homocysteine + H(+). Its function is as follows. Specifically methylates the uridine in position 2552 of 23S rRNA at the 2'-O position of the ribose in the fully assembled 50S ribosomal subunit. The chain is Ribosomal RNA large subunit methyltransferase E from Coxiella burnetii (strain RSA 331 / Henzerling II).